The following is a 122-amino-acid chain: Small ribosomal subunit protein uS13 (122 aa).

The tract at residues 94–122 (GLPVRGQSTQKNARTRKGPRKTVAGKKGK) is disordered. The segment covering 106-122 (ARTRKGPRKTVAGKKGK) has biased composition (basic residues).

The protein belongs to the universal ribosomal protein uS13 family. In terms of assembly, part of the 30S ribosomal subunit. Forms a loose heterodimer with protein S19. Forms two bridges to the 50S subunit in the 70S ribosome.

Located at the top of the head of the 30S subunit, it contacts several helices of the 16S rRNA. In the 70S ribosome it contacts the 23S rRNA (bridge B1a) and protein L5 of the 50S subunit (bridge B1b), connecting the 2 subunits; these bridges are implicated in subunit movement. Contacts the tRNAs in the A and P-sites. The chain is Small ribosomal subunit protein uS13 from Mycoplasmopsis synoviae (strain 53) (Mycoplasma synoviae).